The chain runs to 115 residues: Large ribosomal subunit protein bL20 (115 aa).

The protein belongs to the bacterial ribosomal protein bL20 family.

Its function is as follows. Binds directly to 23S ribosomal RNA and is necessary for the in vitro assembly process of the 50S ribosomal subunit. It is not involved in the protein synthesizing functions of that subunit. This chain is Large ribosomal subunit protein bL20, found in Cytophaga hutchinsonii (strain ATCC 33406 / DSM 1761 / CIP 103989 / NBRC 15051 / NCIMB 9469 / D465).